Consider the following 161-residue polypeptide: Endoribonuclease YbeY (161 aa).

Zn(2+) contacts are provided by His-127, His-131, and His-137.

Belongs to the endoribonuclease YbeY family. Zn(2+) serves as cofactor.

Its subcellular location is the cytoplasm. Its function is as follows. Single strand-specific metallo-endoribonuclease involved in late-stage 70S ribosome quality control and in maturation of the 3' terminus of the 16S rRNA. This chain is Endoribonuclease YbeY, found in Listeria monocytogenes serotype 4a (strain HCC23).